Consider the following 376-residue polypeptide: tRNA-aminoacylation cofactor ARC1 (376 aa).

Residues 22–46 form an interaction with methionyl-tRNA synthetase MES1 region; sequence KEQSAQAAQWESVLKSGQIQPHLDQ. Interaction with glutamyl-tRNA synthetase GUS1 regions lie at residues 52–61 and 91–121; these read RDNTFIVSTL and TYTTYRHILRWIDYMQNLLEVSSTDKLEINH. The interval 133–206 is disordered; that stretch reads KKKAPAGGAA…QNKAPEKPKP (74 aa). Residues 146 to 180 show a composition bias toward basic and acidic residues; sequence AKADEDVSKKAKKQDHPRGKPDEETLKKLREEAKA. The span at 186–199 shows a compositional bias: low complexity; the sequence is KAANAKQQQEQQNK. The tRNA-binding domain maps to 205 to 307; the sequence is KPSAIDFRVG…KDSKAGDKVF (103 aa).

The protein belongs to the tRNA-aminoacylation cofactor ARC1 family. In terms of assembly, component of a yeast aminoacyl-tRNA synthase (aaRS) complex formed by methionyl-tRNA synthase MES1, glutamyl-tRNA synthase GUS1 and the tRNA aminoacylation cofactor ARC1 in a stoichiometric complex. Interacts (via N-ter) with MES1 (via N-ter) and GUS1 (via N-ter). Can also form a stable binary complex with either MES1 or GUS1 that is functional in terms of aminoacylation.

It localises to the cytoplasm. Its function is as follows. Binds to tRNA and functions as a cofactor for the methionyl-tRNA synthetase (MetRS) and glutamyl-tRNA synthetase (GluRS). Forms a complex with MetRS and GluRS and increases their affinity for cognate tRNAs due to the presence of a tRNA binding domain in its middle and C-terminal part. Binds specifically G4 quadruplex nucleic acid structures (these are four-stranded right-handed helices, stabilized by guanine base quartets). Also required for cytoplasmic confinement of the synthetases and tRNA. The protein is tRNA-aminoacylation cofactor ARC1 (ARC1) of Saccharomyces cerevisiae (strain ATCC 204508 / S288c) (Baker's yeast).